Consider the following 124-residue polypeptide: UPF0102 protein PP_1324 (124 aa).

It belongs to the UPF0102 family.

In Pseudomonas putida (strain ATCC 47054 / DSM 6125 / CFBP 8728 / NCIMB 11950 / KT2440), this protein is UPF0102 protein PP_1324.